The primary structure comprises 392 residues: Na(+)/H(+) antiporter NhaA 2 (392 aa).

11 consecutive transmembrane segments (helical) span residues 20–40, 61–81, 99–119, 127–147, 158–178, 181–201, 209–229, 265–285, 298–318, 336–356, and 365–385; these read FFAA…AALI, LSVS…LVGL, ALPG…YVAF, IGGW…VLSL, IFLS…IALF, SDLS…LVAL, LLPY…SGIH, VAFA…LSGI, VALG…ALAI, GVAA…ALAF, and EVKV…VVVL.

Belongs to the NhaA Na(+)/H(+) (TC 2.A.33) antiporter family.

It localises to the cell inner membrane. The enzyme catalyses Na(+)(in) + 2 H(+)(out) = Na(+)(out) + 2 H(+)(in). Functionally, na(+)/H(+) antiporter that extrudes sodium in exchange for external protons. The sequence is that of Na(+)/H(+) antiporter NhaA 2 from Pseudomonas syringae pv. syringae (strain B728a).